A 251-amino-acid polypeptide reads, in one-letter code: UPF0309 protein SAV_3856 (251 aa).

The 185-residue stretch at 36 to 220 (IADTVADGGR…AGTLADRGIE (185 aa)) folds into the SIS domain.

The protein belongs to the UPF0309 family.

This is UPF0309 protein SAV_3856 from Streptomyces avermitilis (strain ATCC 31267 / DSM 46492 / JCM 5070 / NBRC 14893 / NCIMB 12804 / NRRL 8165 / MA-4680).